We begin with the raw amino-acid sequence, 975 residues long: C-1-tetrahydrofolate synthase, mitochondrial (975 aa).

The transit peptide at 1–34 (MLSRLSLLSNSRAFQQARWRIYRLKVSPTVHASQ) directs the protein to the mitochondrion. The segment at 35-343 (YHILSGRKLA…KPLPLHLESP (309 aa)) is methylenetetrahydrofolate dehydrogenase and cyclohydrolase. Substrate-binding positions include 83 to 87 (YVRMK) and 130 to 132 (IQL). Residues 201-203 (GRS) and Ser-226 each bind NADP(+). 301 to 305 (PGGVG) provides a ligand contact to substrate. Residues 344-975 (VPSDIDISRA…DDDGEIEGLF (632 aa)) are formyltetrahydrofolate synthetase. ATP is bound at residue 408-415 (TPLGEGKS).

The protein in the N-terminal section; belongs to the tetrahydrofolate dehydrogenase/cyclohydrolase family. In the C-terminal section; belongs to the formate--tetrahydrofolate ligase family. In terms of assembly, homodimer.

The protein resides in the mitochondrion. It catalyses the reaction (6R)-5,10-methylene-5,6,7,8-tetrahydrofolate + NADP(+) = (6R)-5,10-methenyltetrahydrofolate + NADPH. It carries out the reaction (6R)-5,10-methenyltetrahydrofolate + H2O = (6R)-10-formyltetrahydrofolate + H(+). The enzyme catalyses (6S)-5,6,7,8-tetrahydrofolate + formate + ATP = (6R)-10-formyltetrahydrofolate + ADP + phosphate. The protein operates within one-carbon metabolism; tetrahydrofolate interconversion. Its function is as follows. Mitochondrial isozyme of C-1-tetrahydrofolate synthase. The trifunctional enzyme catalyzes the interconversion of the one-carbon derivatives of tetrahydrofolate (THF) between different oxidation states by the enzymatic activities 10-formyltetrahydrofolate synthetase, 5,lO-methenyltetrahydrofolate cyclohydrolase, and 5,lO-methylenetetrahydrofolate dehydrogenase. This Saccharomyces cerevisiae (strain ATCC 204508 / S288c) (Baker's yeast) protein is C-1-tetrahydrofolate synthase, mitochondrial.